Here is a 309-residue protein sequence, read N- to C-terminus: Probable sugar phosphate/phosphate translocator At5g05820 (309 aa).

Helical transmembrane passes span 9–29 (FFTIGLVASWYSSNIGVLLLN), 42–62 (IFLTMCHMTACSLLSYVAIAW), 77–97 (FFKIAALSLVFCVSVVFGNIS), 100–120 (FLPVSFNQAIGATTPFFTAVF), 130–150 (AWLTYFTLVPVVTGVVIASGG), 154–174 (FHLFGFLMCIAATAARALKSV), 192–212 (LLLYMAPIAVVLLLPATLIME), 229–249 (IVWYLLFNSALAYLVNLTNFL), 256–278 (ALTLQVLGNAKGAVAVVVSILIF), and 282–301 (VSVTGMLGYSLTVCGVILYS). The EamA domain maps to 30-147 (KYLLSNYGFK…VPVVTGVVIA (118 aa)).

Belongs to the TPT transporter family. TPT (TC 2.A.7.9) subfamily.

The protein resides in the membrane. In Arabidopsis thaliana (Mouse-ear cress), this protein is Probable sugar phosphate/phosphate translocator At5g05820.